A 345-amino-acid chain; its full sequence is uncharacterized protein (345 aa).

Disordered regions lie at residues 1–58 and 139–165; these read MPSP…WRGD and KTNSTFYKDNGDSSEKQGSAESKNSPK. The segment covering 27–39 has biased composition (basic and acidic residues); sequence IKGEGSDDGKEKS. Polar residues predominate over residues 154–165; sequence KQGSAESKNSPK.

It belongs to the MG307/MG309/MG338 family.

This is an uncharacterized protein from Mycoplasma pneumoniae (strain ATCC 29342 / M129 / Subtype 1) (Mycoplasmoides pneumoniae).